The chain runs to 488 residues: Glutamyl-tRNA(Gln) amidotransferase subunit A (488 aa).

Catalysis depends on charge relay system residues K76 and S151. Residue S175 is the Acyl-ester intermediate of the active site.

Belongs to the amidase family. GatA subfamily. In terms of assembly, heterotrimer of A, B and C subunits.

The catalysed reaction is L-glutamyl-tRNA(Gln) + L-glutamine + ATP + H2O = L-glutaminyl-tRNA(Gln) + L-glutamate + ADP + phosphate + H(+). In terms of biological role, allows the formation of correctly charged Gln-tRNA(Gln) through the transamidation of misacylated Glu-tRNA(Gln) in organisms which lack glutaminyl-tRNA synthetase. The reaction takes place in the presence of glutamine and ATP through an activated gamma-phospho-Glu-tRNA(Gln). This is Glutamyl-tRNA(Gln) amidotransferase subunit A from Symbiobacterium thermophilum (strain DSM 24528 / JCM 14929 / IAM 14863 / T).